A 417-amino-acid chain; its full sequence is Valine--pyruvate aminotransferase (417 aa).

N6-(pyridoxal phosphate)lysine is present on Lys-249.

It belongs to the class-I pyridoxal-phosphate-dependent aminotransferase family. Homodimer. Pyridoxal 5'-phosphate is required as a cofactor.

The protein resides in the cytoplasm. It catalyses the reaction L-valine + pyruvate = 3-methyl-2-oxobutanoate + L-alanine. Its function is as follows. Involved in the biosynthesis of alanine. The polypeptide is Valine--pyruvate aminotransferase (avtA) (Escherichia coli (strain K12)).